The following is a 142-amino-acid chain: Transcription antitermination protein NusB (142 aa).

It belongs to the NusB family.

Functionally, involved in transcription antitermination. Required for transcription of ribosomal RNA (rRNA) genes. Binds specifically to the boxA antiterminator sequence of the ribosomal RNA (rrn) operons. The protein is Transcription antitermination protein NusB of Borrelia garinii subsp. bavariensis (strain ATCC BAA-2496 / DSM 23469 / PBi) (Borreliella bavariensis).